The primary structure comprises 252 residues: Zinc finger protein 511 (252 aa).

C2H2-type zinc fingers lie at residues 80–105, 107–130, and 144–169; these read FACQ…HTLH, NVCS…LEWH, and YQCL…VRMH. The interval 177-221 is disordered; it reads FDKPKKSRSPASAEAPGDSGERSEGEAMEICSEPVAASPAPAGER. Residue R240 is modified to Omega-N-methylarginine.

It belongs to the krueppel C2H2-type zinc-finger protein family.

The protein localises to the nucleus. In terms of biological role, may be involved in transcriptional regulation. This Homo sapiens (Human) protein is Zinc finger protein 511.